Consider the following 238-residue polypeptide: tRNA (guanine-N(7)-)-methyltransferase (238 aa).

Residues glutamate 68, glutamate 93, aspartate 120, and aspartate 143 each contribute to the S-adenosyl-L-methionine site. The active site involves aspartate 143. Residues lysine 147, aspartate 179, and 216 to 219 (TKFE) each bind substrate.

It belongs to the class I-like SAM-binding methyltransferase superfamily. TrmB family.

The catalysed reaction is guanosine(46) in tRNA + S-adenosyl-L-methionine = N(7)-methylguanosine(46) in tRNA + S-adenosyl-L-homocysteine. The protein operates within tRNA modification; N(7)-methylguanine-tRNA biosynthesis. In terms of biological role, catalyzes the formation of N(7)-methylguanine at position 46 (m7G46) in tRNA. This Stutzerimonas stutzeri (strain A1501) (Pseudomonas stutzeri) protein is tRNA (guanine-N(7)-)-methyltransferase.